A 1717-amino-acid polypeptide reads, in one-letter code: MEPAAAATVQRLPELGREDRASAPAAAAAAAAAAAAAAAALAAAAGGGRSPEPALTPAAPSGGNGSGSGAREEAPGEAPPGPLPGRAGGAGRRRRRGAPQPIAGGAAPVPGAGGGANSLLLRRGRLKRNLSAAAAAASSSSSSSAAAASHSPGAAGLPASCSASASLCTRSLDRKTLLLKHRQTLQLQPSDRDWVRHQLQRGCVHVFDRHMASTYLRPVLCTLDTTAGEVAARLLQLGHKGGGVVKVLGQGPGAAAAREPAEPPPEAGPRLAPPEPRDSEVPPARSAPGAFGGPPRAPPADLPLPVGGPGGWSRRASPAPSDSSPGEPFVGGPVSSPRAPRPVVSDTESFSLSPSAESVSDRLDPYSSGGGSSSSSEELEADAASAPTGVPGQPRRPGHPAQPLPLPQTASSPQPQQKAPRAIDSPGGAVREGSCEEKAAAAVAPGGLQSTPGRSGVTAEKAPPPPPPPTLYVQLHGETTRRLEAEEKPLQIQNDYLFQLGFGELWRVQEEGMDSEIGCLIRFYAGKPHSTGSSERIQLSGMYNVRKGKMQLPVNRWTRRQVILCGTCLIVSSVKDSLTGKMHVLPLIGGKVEEVKKHQHCLAFSSSGPQSQTYYICFDTFTEYLRWLRQVSKVASQRISSVDLSCCSLEHLPANLFYSQDLTHLNLKQNFLRQNPSLPAARGLNELQRFTKLKSLNLSNNHLGDFPLAVCSIPTLAELNVSCNALRSVPAAVGVMHNLQTFLLDGNFLQSLPAELENMKQLSYLGLSFNEFTDIPEVLEKLTAVDKLCMSGNCVETLRLQALRKMPHIKHVDLRLNVIRKLIADEVDFLQHVTQLDLRDNKLGDLDAMIFNNIEVLHCERNQLVTLDICGYFLKALYASSNELVQLDVYPVPNYLSYMDVSRNRLENVPEWVCESRKLEVLDIGHNQICELPARLFCNSSLRKLLAGHNQLARLPERLERTSVEVLDVQHNQLLELPPNLLMKADSLRFLNASANKLESLPPATLSEETNSILQELYLTNNSLTDKCVPLLTGHPHLKILHMAYNRLQSFPASKMAKLEELEEIDLSGNKLKAIPTTIMNCRRMHTVIAHSNCIEVFPEVMQLPEIKCVDLSCNELSEVTLPENLPPKLQELDLTGNPRLVLDHKTLELLNNIRCFKIDQPSTGDASGAPAVWSHGYTEASGVKNKLCVAALSVNNFCDNREALYGVFDGDRNVEVPYLLQCTMSDILAEELQKTKNEEEYMVNTFIVMQRKLGTAGQKLGGAAVLCHIKHDPVDPGGSFTLTSANVGKCQTVLCRNGKPLPLSRSYIMSCEEELKRIKQHKAIITEDGKVNGVTESTRILGYTFLHPSVVPRPHVQSVLLTPQDEFFILGSKGLWDSLSVEEAVEAVRNVPDALAAAKKLCTLAQSYGCHDSISAVVVQLSVTEDSFCCCELSAGGAVPPPSPGIFPPSVNMVIKDRPSDGLGVPSSSSGMASEISSELSTSEMSSEVGSTASDEPPPGALSENSPAYPSEQRCMLHPICLSNSFQRQLSSATFSSAFSDNGLDSDDEEPIEGVFTNGSRVEVEVDIHCSRAKEKEKQQHLLQVPAEASDEGIVISANEDEPGLPRKADFSAVGTIGRRRANGSVAPQERSHNVIEVATDAPLRKPGGYFAAPAQPDPDDQFIIPPELEEEVKEIMKHHQEQQQQQQPPPPPQLQPQLPRHYQLDQLPDYYDTPL.

The residue at position 1 (Met-1) is an N-acetylmethionine. Disordered regions lie at residues 1–25 (MEPA…SAPA), 41–118 (LAAA…GANS), 136–156 (AASS…GAAG), and 252–470 (PGAA…PPPT). The segment covering 98 to 110 (APQPIAGGAAPVP) has biased composition (low complexity). Positions 262–274 (EPPPEAGPRLAPP) are enriched in pro residues. Composition is skewed to low complexity over residues 313-325 (SRRA…DSSP) and 333-345 (PVSS…PVVS). Ser-317 is subject to Phosphoserine. Composition is skewed to polar residues over residues 346–358 (DTES…SAES) and 408–417 (QTASSPQPQQ). At Ser-412 the chain carries Phosphoserine. The PH domain occupies 536 to 636 (RIQLSGMYNV…WLRQVSKVAS (101 aa)). LRR repeat units lie at residues 638–659 (RISS…LFYS), 661–682 (DLTH…PAAR), 692–712 (KLKS…AVCS), 715–736 (TLAE…VGVM), 738–760 (NLQT…ENMK), 761–783 (QLSY…EKLT), 784–804 (AVDK…QALR), 808–831 (HIKH…DFLQ), 832–853 (HVTQ…IFNN), 873–894 (FLKA…PVPN), 895–916 (YLSY…VCES), 918–939 (KLEV…LFCN), 941–962 (SLRK…LERT), 963–984 (SVEV…LLMK), 987–1008 (SLRF…TLSE), 1013–1033 (ILQE…PLLT), 1037–1058 (HLKI…KMAK), 1061–1082 (ELEE…IMNC), 1084–1105 (RMHT…MQLP), 1106–1127 (EIKC…ENLP), and 1129–1150 (KLQE…TLEL). Positions 1076 to 1205 (PTTIMNCRRM…NNFCDNREAL (130 aa)) are interaction with NHERF1. In terms of domain architecture, PPM-type phosphatase spans 1175-1422 (SHGYTEASGV…DSISAVVVQL (248 aa)). The Mn(2+) site is built by Asp-1210, Gly-1211, Lys-1374, and Asp-1413. Disordered regions lie at residues 1458–1510 (DRPS…SPAY) and 1673–1717 (EVKE…DTPL). The span at 1468-1489 (SSSSGMASEISSELSTSEMSSE) shows a compositional bias: low complexity. Residues 1715 to 1717 (TPL) carry the PDZ-binding; required for interaction with NHERF1 motif.

Interacts with the nucleotide free form of K-Ras (KRAS) via its LRR repeats. Interacts with AKT2, AKT3, PRKCB isoform beta-II, STK4, RPS6KB1, RAF1. Isoform 1 (predominantly) and isoform 2 interact with BRAP. Interacts with FKBP5; FKBP5 acts as a scaffold for PHLPP1 and Akt. Interacts with SCRIB; SCRIB acts as a scaffold for PHLPP1 and Akt. Interacts with NHERF1; NHERF1 scaffolds a heterotrimeric complex with PTEN at the plasma membrane. Interacts with WDR48 and USP12. The cofactor is Mn(2+). In colorectal cancer tissue, expression is highest in the surface epithelium of normal colonic mucosa adjacent to the cancer tissue but is largely excluded from the crypt bases. Expression is lost or significantly decreased in 78% of tested tumors (at protein level). Ubiquitously expressed in non-cancerous tissues.

Its subcellular location is the cytoplasm. It is found in the membrane. The protein resides in the nucleus. It localises to the cell membrane. The catalysed reaction is O-phospho-L-seryl-[protein] + H2O = L-seryl-[protein] + phosphate. It catalyses the reaction O-phospho-L-threonyl-[protein] + H2O = L-threonyl-[protein] + phosphate. With respect to regulation, insensitive to okadaic acid. Deubiquitination by WDR48-USP12 complex positively regulates PHLPP1 stability. Functionally, protein phosphatase involved in regulation of Akt and PKC signaling. Mediates dephosphorylation in the C-terminal domain hydrophobic motif of members of the AGC Ser/Thr protein kinase family; specifically acts on 'Ser-473' of AKT2 and AKT3, 'Ser-660' of PRKCB and 'Ser-657' of PRKCA. Isoform 2 seems to have a major role in regulating Akt signaling in hippocampal neurons. Akt regulates the balance between cell survival and apoptosis through a cascade that primarily alters the function of transcription factors that regulate pro- and antiapoptotic genes. Dephosphorylation of 'Ser-473' of Akt triggers apoptosis and suppression of tumor growth. Dephosphorylation of PRKCA and PRKCB leads to their destabilization and degradation. Dephosphorylates STK4 on 'Thr-387' leading to STK4 activation and apoptosis. Dephosphorylates RPS6KB1 and is involved in regulation of cap-dependent translation. Inhibits cancer cell proliferation and may act as a tumor suppressor. Dephosphorylates RAF1 inhibiting its kinase activity. May act as a negative regulator of K-Ras signaling in membrane rafts. Involved in the hippocampus-dependent long-term memory formation. Involved in circadian control by regulating the consolidation of circadian periodicity after resetting. Involved in development and function of regulatory T-cells. This Homo sapiens (Human) protein is PH domain leucine-rich repeat-containing protein phosphatase 1 (PHLPP1).